A 172-amino-acid chain; its full sequence is Transcriptional repressor NrdR (172 aa).

A zinc finger spans residues 3-34 (CPFCRHPDSRVVDSRTTDDGTSIRRRRQCPDC). An ATP-cone domain is found at 46-136 (LMVIKRSGVT…VYRAFDSLED (91 aa)). The interval 152–172 (ERSGGGTCGTGTVPVPAGTAD) is disordered. Residues 161 to 172 (TGTVPVPAGTAD) are compositionally biased toward low complexity.

It belongs to the NrdR family. The cofactor is Zn(2+).

Its function is as follows. Negatively regulates transcription of bacterial ribonucleotide reductase nrd genes and operons by binding to NrdR-boxes. The protein is Transcriptional repressor NrdR of Streptomyces clavuligerus.